The sequence spans 115 residues: Cytochrome c oxidase assembly protein COX16 homolog, mitochondrial (115 aa).

Over 1 to 6 the chain is Mitochondrial matrix; sequence MSRLKF. The helical transmembrane segment at 7–29 threads the bilayer; sequence VRVGLPFFAIVLGSAYGLHFFQQ. Topologically, residues 30-115 are mitochondrial intermembrane; the sequence is VRFDFRKIKQ…RKVRELKSNV (86 aa).

The protein belongs to the COX16 family.

The protein localises to the mitochondrion inner membrane. Functionally, required for the assembly of the mitochondrial respiratory chain complex IV (CIV), also known as cytochrome c oxidase. This Caenorhabditis elegans protein is Cytochrome c oxidase assembly protein COX16 homolog, mitochondrial.